A 37-amino-acid polypeptide reads, in one-letter code: Glucagon-1 (37 aa).

Belongs to the glucagon family.

It is found in the secreted. In terms of biological role, glucagon plays a key role in glucose metabolism and homeostasis. Regulates blood glucose by increasing gluconeogenesis and decreasing glycolysis. The polypeptide is Glucagon-1 (Huso dauricus (Kaluga sturgeon)).